Consider the following 195-residue polypeptide: Sec-independent protein translocase protein TatB (195 aa).

Residues 1 to 21 (MFDIGFSELALIAVVALVVLG) traverse the membrane as a helical segment. The interval 130–195 (EPGSAQPHTP…SSTSPQEKTP (66 aa)) is disordered. 2 stretches are compositionally biased toward low complexity: residues 145 to 157 (PVVA…APAP) and 175 to 195 (TTHA…EKTP).

It belongs to the TatB family. As to quaternary structure, the Tat system comprises two distinct complexes: a TatABC complex, containing multiple copies of TatA, TatB and TatC subunits, and a separate TatA complex, containing only TatA subunits. Substrates initially bind to the TatABC complex, which probably triggers association of the separate TatA complex to form the active translocon.

It localises to the cell inner membrane. Functionally, part of the twin-arginine translocation (Tat) system that transports large folded proteins containing a characteristic twin-arginine motif in their signal peptide across membranes. Together with TatC, TatB is part of a receptor directly interacting with Tat signal peptides. TatB may form an oligomeric binding site that transiently accommodates folded Tat precursor proteins before their translocation. The sequence is that of Sec-independent protein translocase protein TatB from Xanthomonas campestris pv. campestris (strain 8004).